A 470-amino-acid polypeptide reads, in one-letter code: Pyruvate kinase I (470 aa).

Residue arginine 32 participates in substrate binding. 4 residues coordinate K(+): asparagine 34, serine 36, aspartate 66, and threonine 67. 34–37 (NFSH) provides a ligand contact to ATP. Residues arginine 73 and lysine 156 each coordinate ATP. Glutamate 222 serves as a coordination point for Mg(2+). Substrate is bound by residues glycine 245, aspartate 246, and threonine 278. Aspartate 246 serves as a coordination point for Mg(2+).

Belongs to the pyruvate kinase family. As to quaternary structure, homotetramer. Requires Mg(2+) as cofactor. K(+) is required as a cofactor.

The catalysed reaction is pyruvate + ATP = phosphoenolpyruvate + ADP + H(+). It participates in carbohydrate degradation; glycolysis; pyruvate from D-glyceraldehyde 3-phosphate: step 5/5. In Salmonella typhi, this protein is Pyruvate kinase I (pykF).